A 530-amino-acid chain; its full sequence is Hyccin 2 (530 aa).

2 positions are modified to phosphothreonine: threonine 30 and threonine 306. Phosphoserine is present on residues serine 321 and serine 341. The interval 328–410 (RREGAEGVNG…DSVVRKQYVQ (83 aa)) is disordered. Residues 353-373 (SGASLSSQPIGTKPSSSSQRG) show a composition bias toward polar residues. 4 positions are modified to phosphoserine: serine 430, serine 442, serine 444, and serine 491. The tract at residues 502 to 530 (EGKELLSPGAPLTKQSRSPSFNMQLISQV) is disordered. Residues 514–530 (TKQSRSPSFNMQLISQV) show a composition bias toward polar residues.

It belongs to the Hyccin family. In terms of assembly, component of a phosphatidylinositol 4-kinase (PI4K) complex, composed of PI4KA, EFR3 (EFR3A or EFR3B), TTC7 (TTC7A or TTC7B) and HYCC (HYCC1 or HYCC2).

Its subcellular location is the cytoplasm. It localises to the cytosol. The protein localises to the cell membrane. Functionally, component of a complex required to localize phosphatidylinositol 4-kinase (PI4K) to the plasma membrane. The polypeptide is Hyccin 2 (Homo sapiens (Human)).